A 122-amino-acid polypeptide reads, in one-letter code: ATP-dependent Clp protease adapter protein ClpS (122 aa).

Belongs to the ClpS family. Binds to the N-terminal domain of the chaperone ClpA.

Involved in the modulation of the specificity of the ClpAP-mediated ATP-dependent protein degradation. The sequence is that of ATP-dependent Clp protease adapter protein ClpS from Pseudomonas fluorescens (strain SBW25).